The sequence spans 208 residues: Putative 3-methyladenine DNA glycosylase (208 aa).

Belongs to the DNA glycosylase MPG family.

This chain is Putative 3-methyladenine DNA glycosylase, found in Lactobacillus delbrueckii subsp. bulgaricus (strain ATCC BAA-365 / Lb-18).